The sequence spans 208 residues: Probable Brix domain-containing ribosomal biogenesis protein (208 aa).

The Brix domain occupies 1 to 196; it reads MMLITTSHRP…IWIMEDGRRW (196 aa).

Functionally, probably involved in the biogenesis of the ribosome. The sequence is that of Probable Brix domain-containing ribosomal biogenesis protein from Thermococcus kodakarensis (strain ATCC BAA-918 / JCM 12380 / KOD1) (Pyrococcus kodakaraensis (strain KOD1)).